A 188-amino-acid polypeptide reads, in one-letter code: Peptidyl-tRNA hydrolase (188 aa).

Tyr15 provides a ligand contact to tRNA. The Proton acceptor role is filled by His20. The tRNA site is built by Tyr64, Asn66, and Asn112.

Belongs to the PTH family. As to quaternary structure, monomer.

The protein localises to the cytoplasm. The enzyme catalyses an N-acyl-L-alpha-aminoacyl-tRNA + H2O = an N-acyl-L-amino acid + a tRNA + H(+). Its function is as follows. Hydrolyzes ribosome-free peptidyl-tRNAs (with 1 or more amino acids incorporated), which drop off the ribosome during protein synthesis, or as a result of ribosome stalling. In terms of biological role, catalyzes the release of premature peptidyl moieties from peptidyl-tRNA molecules trapped in stalled 50S ribosomal subunits, and thus maintains levels of free tRNAs and 50S ribosomes. This Cytophaga hutchinsonii (strain ATCC 33406 / DSM 1761 / CIP 103989 / NBRC 15051 / NCIMB 9469 / D465) protein is Peptidyl-tRNA hydrolase.